We begin with the raw amino-acid sequence, 500 residues long: Cytochrome P450 2D26 (500 aa).

Serine 249 is modified (phosphoserine). Cysteine 446 serves as a coordination point for heme.

The protein belongs to the cytochrome P450 family. Heme is required as a cofactor.

The protein resides in the endoplasmic reticulum membrane. It is found in the microsome membrane. It carries out the reaction an organic molecule + reduced [NADPH--hemoprotein reductase] + O2 = an alcohol + oxidized [NADPH--hemoprotein reductase] + H2O + H(+). Its function is as follows. Cytochromes P450 are a group of heme-thiolate monooxygenases. In liver microsomes, this enzyme is involved in an NADPH-dependent electron transport pathway. It oxidizes a variety of structurally unrelated compounds, including steroids, fatty acids, and xenobiotics. This Rattus norvegicus (Rat) protein is Cytochrome P450 2D26 (Cyp2d26).